Reading from the N-terminus, the 183-residue chain is Tetrahydromethanopterin S-methyltransferase subunit A 2 (183 aa).

The Cytoplasmic portion of the chain corresponds to 1-101 (MFLMVEKKPV…TMKALHSNGV (101 aa)). Residue H87 participates in 5-hydroxybenzimidazolylcob(I)amide binding. A helical membrane pass occupies residues 102–118 (DLETGRIIGATGAIPYI). At 119-183 (ENMPEEAIER…IGKGDSEENT (65 aa)) the chain is on the extracellular side.

It belongs to the MtrA family. The complex is composed of 8 subunits; MtrA, MtrB, MtrC, MtrD, MtrE, MtrF, MtrG and MtrH. Requires 5-hydroxybenzimidazolylcob(I)amide as cofactor.

It localises to the cell membrane. The enzyme catalyses 5-methyl-5,6,7,8-tetrahydromethanopterin + coenzyme M + 2 Na(+)(in) = 5,6,7,8-tetrahydromethanopterin + methyl-coenzyme M + 2 Na(+)(out). It functions in the pathway one-carbon metabolism; methanogenesis from CO(2); methyl-coenzyme M from 5,10-methylene-5,6,7,8-tetrahydromethanopterin: step 2/2. Its function is as follows. Part of a complex that catalyzes the formation of methyl-coenzyme M and tetrahydromethanopterin from coenzyme M and methyl-tetrahydromethanopterin. This is an energy-conserving, sodium-ion translocating step. The protein is Tetrahydromethanopterin S-methyltransferase subunit A 2 of Methanothermobacter thermautotrophicus (strain ATCC 29096 / DSM 1053 / JCM 10044 / NBRC 100330 / Delta H) (Methanobacterium thermoautotrophicum).